A 612-amino-acid chain; its full sequence is Alpha-glycerophosphate oxidase (612 aa).

21–49 (DLLIIGGGITGAGVALQAAASGLDTGLIE) is an FAD binding site. Basic and acidic residues predominate over residues 398–408 (VETSTSEKELD). A disordered region spans residues 398-418 (VETSTSEKELDPSAVSRGSSF).

The protein belongs to the FAD-dependent glycerol-3-phosphate dehydrogenase family. FAD serves as cofactor.

It is found in the cytoplasm. It catalyses the reaction sn-glycerol 3-phosphate + O2 = dihydroxyacetone phosphate + H2O2. The chain is Alpha-glycerophosphate oxidase (glpO) from Streptococcus pyogenes serotype M3 (strain ATCC BAA-595 / MGAS315).